A 475-amino-acid polypeptide reads, in one-letter code: Probable GABA permease (475 aa).

12 helical membrane-spanning segments follow: residues Val-27 to Ala-47, Ile-48 to Leu-68, Leu-105 to Leu-125, Ala-127 to Val-147, Phe-163 to Val-183, Ala-211 to Ile-231, Val-250 to Pro-270, Leu-296 to Thr-316, Pro-345 to Pro-365, Val-368 to Ala-388, Pro-413 to Met-433, and His-438 to Ala-458.

Belongs to the amino acid-polyamine-organocation (APC) superfamily. Amino acid transporter (AAT) (TC 2.A.3.1) family.

The protein localises to the membrane. Involved in the degradation of beta-alanine. The polypeptide is Probable GABA permease (bauD) (Pseudomonas aeruginosa (strain ATCC 15692 / DSM 22644 / CIP 104116 / JCM 14847 / LMG 12228 / 1C / PRS 101 / PAO1)).